We begin with the raw amino-acid sequence, 325 residues long: 5-dehydro-2-deoxygluconokinase (325 aa).

Belongs to the carbohydrate kinase PfkB family.

It carries out the reaction 5-dehydro-2-deoxy-D-gluconate + ATP = 6-phospho-5-dehydro-2-deoxy-D-gluconate + ADP + H(+). It functions in the pathway polyol metabolism; myo-inositol degradation into acetyl-CoA; acetyl-CoA from myo-inositol: step 5/7. Functionally, catalyzes the phosphorylation of 5-dehydro-2-deoxy-D-gluconate (2-deoxy-5-keto-D-gluconate or DKG) to 6-phospho-5-dehydro-2-deoxy-D-gluconate (DKGP). The chain is 5-dehydro-2-deoxygluconokinase from Listeria monocytogenes serotype 4b (strain CLIP80459).